The primary structure comprises 320 residues: o-succinylbenzoate synthase (320 aa).

The active-site Proton donor is the lysine 133. Residues aspartate 161, glutamate 190, and aspartate 213 each contribute to the Mg(2+) site. Lysine 235 functions as the Proton acceptor in the catalytic mechanism.

It belongs to the mandelate racemase/muconate lactonizing enzyme family. MenC type 1 subfamily. A divalent metal cation is required as a cofactor.

The enzyme catalyses (1R,6R)-6-hydroxy-2-succinyl-cyclohexa-2,4-diene-1-carboxylate = 2-succinylbenzoate + H2O. It functions in the pathway quinol/quinone metabolism; 1,4-dihydroxy-2-naphthoate biosynthesis; 1,4-dihydroxy-2-naphthoate from chorismate: step 4/7. Its pathway is quinol/quinone metabolism; menaquinone biosynthesis. Functionally, converts 2-succinyl-6-hydroxy-2,4-cyclohexadiene-1-carboxylate (SHCHC) to 2-succinylbenzoate (OSB). The protein is o-succinylbenzoate synthase of Shigella flexneri.